A 308-amino-acid chain; its full sequence is uncharacterized protein (308 aa).

The first 18 residues, 1-18, serve as a signal peptide directing secretion; it reads MKIILLFLAALASFTVHA.

This is an uncharacterized protein from Escherichia coli (strain K12).